Here is a 115-residue protein sequence, read N- to C-terminus: Prefoldin subunit beta (115 aa).

This sequence belongs to the prefoldin subunit beta family. As to quaternary structure, heterohexamer of two alpha and four beta subunits.

The protein resides in the cytoplasm. Functionally, molecular chaperone capable of stabilizing a range of proteins. Seems to fulfill an ATP-independent, HSP70-like function in archaeal de novo protein folding. The polypeptide is Prefoldin subunit beta (Methanococcus aeolicus (strain ATCC BAA-1280 / DSM 17508 / OCM 812 / Nankai-3)).